Consider the following 287-residue polypeptide: 4,4'-diapophytoene synthase (287 aa).

(2E,6E)-farnesyl diphosphate contacts are provided by residues His18 to Ser21, Tyr41, and Arg45. Positions 48 and 52 each coordinate Mg(2+). Gln165 contacts (2E,6E)-farnesyl diphosphate. A Mg(2+)-binding site is contributed by Asn168. Arg171 contributes to the (2E,6E)-farnesyl diphosphate binding site. Residue Asp172 participates in Mg(2+) binding. Tyr248 lines the (2E,6E)-farnesyl diphosphate pocket.

This sequence belongs to the phytoene/squalene synthase family. CrtM subfamily. The cofactor is Mg(2+).

It carries out the reaction 2 (2E,6E)-farnesyl diphosphate = 15-cis-4,4'-diapophytoene + 2 diphosphate. It participates in carotenoid biosynthesis; staphyloxanthin biosynthesis; staphyloxanthin from farnesyl diphosphate: step 1/5. Involved in the biosynthesis of the yellow-orange carotenoid staphyloxanthin, which plays a role in the virulence via its protective function against oxidative stress. Catalyzes the head-to-head condensation of two molecules of farnesyl diphosphate (FPP) into the colorless C(30) carotenoid 4,4'-diapophytoene (dehydrosqualene). The polypeptide is 4,4'-diapophytoene synthase (Staphylococcus aureus).